A 447-amino-acid chain; its full sequence is Putative branched-chain amino acid carrier protein SAR1419 (447 aa).

12 consecutive transmembrane segments (helical) span residues 6 to 26, 40 to 60, 74 to 94, 114 to 134, 143 to 163, 193 to 213, 229 to 249, 290 to 310, 326 to 346, 350 to 370, 382 to 402, and 417 to 437; these read WVIG…IFPP, ILAF…VGAL, PKFS…LFAI, SSIA…YICL, IGSL…IKAY, GYLT…VNAV, LTAG…LGYI, LLGI…IVAV, FVLV…NAVI, IPVL…ILIA, IPVI…LGWL, and LEWF…GIFV.

The protein belongs to the branched chain amino acid transporter family.

It localises to the cell membrane. Its function is as follows. Component of the transport system for branched-chain amino acids (leucine, isoleucine and valine), which is coupled to a proton motive force (Potential). Contributes to NaCl tolerance. In Staphylococcus aureus (strain MRSA252), this protein is Putative branched-chain amino acid carrier protein SAR1419.